A 116-amino-acid chain; its full sequence is Chondroitin proteoglycan 7 (116 aa).

A signal peptide spans 1–19 (MQTITILALIACVAVPIFA). The disordered stretch occupies residues 29 to 102 (DVVESSGEGS…NAVVASDSPK (74 aa)). Composition is skewed to low complexity over residues 32-41 (ESSGEGSGES) and 48-58 (VESSGEGSGES). Residues serine 68, serine 72, serine 76, serine 84, and serine 88 are each glycosylated (O-linked (Xyl...) (chondroitin sulfate) serine).

In Caenorhabditis elegans, this protein is Chondroitin proteoglycan 7.